Consider the following 367-residue polypeptide: Inner membrane amino-acid ABC transporter permease protein YhdY (367 aa).

The Cytoplasmic portion of the chain corresponds to 1–36; sequence MTKVLLSHPPRPASHNSSRAMVWVRKNLFSSWSNSL. The helical transmembrane segment at 37–57 threads the bilayer; sequence LTIGCIWLMWELIPPLLNWAF. At 58–99 the chain is on the periplasmic side; the sequence is LQANWVGSTRADCTKAGACWVFIHERFGQFMYGLYPHDQRWR. The helical transmembrane segment at 100–120 threads the bilayer; it reads INLALLIGLVSIAPMFWKILP. Residues 121–125 lie on the Cytoplasmic side of the membrane; it reads HRGRY. The chain crosses the membrane as a helical span at residues 126–146; it reads IAAWAVIYPLIVWWLMYGGFF. Over 147 to 162 the chain is Periplasmic; sequence ALERVETRQWGGLTLT. Positions 159–353 constitute an ABC transmembrane type-1 domain; the sequence is LTLTLIIASV…IFCFSMSRYS (195 aa). Residues 163-183 traverse the membrane as a helical segment; sequence LIIASVGIAGALPWGILLALG. Residues 184–192 are Cytoplasmic-facing; it reads RRSHMPIVR. A helical transmembrane segment spans residues 193-213; the sequence is ILSVIFIEFWRGVPLITVLFM. The Periplasmic portion of the chain corresponds to 214–233; it reads SSVMLPLFMAEGTSIDKLIR. The helical transmembrane segment at 234–254 threads the bilayer; that stretch reads ALVGVILFQSAYVAEVVRGGL. Residues 255–291 are Cytoplasmic-facing; that stretch reads QALPKGQYEAAESLALGYWKTQGLVILPQALKLVIPG. The chain crosses the membrane as a helical span at residues 292–312; the sequence is LVNTIIALFKDTSLVIIIGLF. The Periplasmic portion of the chain corresponds to 313–326; the sequence is DLFSSVQQATVDPA. The chain crosses the membrane as a helical span at residues 327 to 347; it reads WLGMSTEGYVFAALIYWIFCF. Topologically, residues 348-367 are cytoplasmic; it reads SMSRYSQYLEKRFNTGRTPH.

This sequence belongs to the binding-protein-dependent transport system permease family. HisMQ subfamily.

Its subcellular location is the cell inner membrane. In terms of biological role, probably part of the binding-protein-dependent transport system YdhWXYZ for an amino acid; probably responsible for the translocation of the substrate across the membrane. The chain is Inner membrane amino-acid ABC transporter permease protein YhdY (yhdY) from Escherichia coli (strain K12).